The primary structure comprises 354 residues: Uroporphyrinogen decarboxylase (354 aa).

Substrate is bound by residues 28–32, Asp78, Tyr155, Ser210, and His325; that span reads RQAGR.

The protein belongs to the uroporphyrinogen decarboxylase family. As to quaternary structure, homodimer.

It localises to the cytoplasm. It catalyses the reaction uroporphyrinogen III + 4 H(+) = coproporphyrinogen III + 4 CO2. The protein operates within porphyrin-containing compound metabolism; protoporphyrin-IX biosynthesis; coproporphyrinogen-III from 5-aminolevulinate: step 4/4. Functionally, catalyzes the decarboxylation of four acetate groups of uroporphyrinogen-III to yield coproporphyrinogen-III. The polypeptide is Uroporphyrinogen decarboxylase (Crocosphaera subtropica (strain ATCC 51142 / BH68) (Cyanothece sp. (strain ATCC 51142))).